Consider the following 516-residue polypeptide: Coiled-coil domain-containing protein 149 (516 aa).

The span at 1–18 shows a compositional bias: basic and acidic residues; the sequence is MANQLRERHQSLKKKYGE. Positions 1 to 29 are disordered; the sequence is MANQLRERHQSLKKKYGELIDGDPSVPPE. Coiled-coil stretches lie at residues 1 to 195 and 259 to 286; these read MANQ…ALEK and IQHQ…LEVS. Positions 321–332 are enriched in basic and acidic residues; that stretch reads PHHKPLTNEEHG. Disordered regions lie at residues 321–350 and 406–452; these read PHHK…SDNE and ETSF…SLGD. Polar residues predominate over residues 414–436; it reads DSQSTASSQENHDNLQSPFSSPE.

Belongs to the CCDC149 family.

The chain is Coiled-coil domain-containing protein 149 (ccdc149) from Xenopus laevis (African clawed frog).